Reading from the N-terminus, the 72-residue chain is Protein SlyX homolog (72 aa).

This sequence belongs to the SlyX family.

The polypeptide is Protein SlyX homolog (Bradyrhizobium diazoefficiens (strain JCM 10833 / BCRC 13528 / IAM 13628 / NBRC 14792 / USDA 110)).